Consider the following 387-residue polypeptide: Leucine aminopeptidase 1 (387 aa).

A signal peptide spans 1 to 18 (MKFTNLSLLALSASLASA). A propeptide spanning residues 19–86 (RFVEQHETDQ…LGTLRTSSVK (68 aa)) is cleaved from the precursor. An N-linked (GlcNAc...) asparagine glycan is attached at Asn179. Residues His187, Asp206, Glu245, and Asp272 each contribute to the Zn(2+) site. Residues Cys321 and Cys325 are joined by a disulfide bond. Residue His354 coordinates Zn(2+).

This sequence belongs to the peptidase M28 family. M28E subfamily. Monomer. The cofactor is Zn(2+).

The protein resides in the secreted. Extracellular aminopeptidase that allows assimilation of proteinaceous substrates. The chain is Leucine aminopeptidase 1 (lap1) from Sclerotinia sclerotiorum (strain ATCC 18683 / 1980 / Ss-1) (White mold).